Reading from the N-terminus, the 422-residue chain is Phosphoribosylamine--glycine ligase (422 aa).

An ATP-grasp domain is found at 107–314 (KAFMQRHGIP…LFDVLDRAID (208 aa)). Residue 133 to 194 (VDREGAPIVI…EEFLAGEEAS (62 aa)) participates in ATP binding. Mg(2+) contacts are provided by Glu284 and Asn286.

Belongs to the GARS family. Mg(2+) is required as a cofactor. It depends on Mn(2+) as a cofactor.

It carries out the reaction 5-phospho-beta-D-ribosylamine + glycine + ATP = N(1)-(5-phospho-beta-D-ribosyl)glycinamide + ADP + phosphate + H(+). Its pathway is purine metabolism; IMP biosynthesis via de novo pathway; N(1)-(5-phospho-D-ribosyl)glycinamide from 5-phospho-alpha-D-ribose 1-diphosphate: step 2/2. This Ralstonia nicotianae (strain ATCC BAA-1114 / GMI1000) (Ralstonia solanacearum) protein is Phosphoribosylamine--glycine ligase.